The following is a 332-amino-acid chain: GTP 3',8-cyclase (332 aa).

Positions 9 to 234 (TFGRRISYLR…DSDHRTGGPS (226 aa)) constitute a Radical SAM core domain. Arg18 contributes to the GTP binding site. Positions 25 and 29 each coordinate [4Fe-4S] cluster. S-adenosyl-L-methionine is bound at residue Tyr31. A [4Fe-4S] cluster-binding site is contributed by Cys32. Residue Arg67 participates in GTP binding. Position 71 (Gly71) interacts with S-adenosyl-L-methionine. Thr100 contacts GTP. Position 124 (Ser124) interacts with S-adenosyl-L-methionine. Lys160 lines the GTP pocket. Residue Met194 coordinates S-adenosyl-L-methionine. Residues Cys257 and Cys260 each coordinate [4Fe-4S] cluster. GTP is bound at residue 262–264 (RVR). Position 274 (Cys274) interacts with [4Fe-4S] cluster.

The protein belongs to the radical SAM superfamily. MoaA family. Monomer and homodimer. It depends on [4Fe-4S] cluster as a cofactor.

The enzyme catalyses GTP + AH2 + S-adenosyl-L-methionine = (8S)-3',8-cyclo-7,8-dihydroguanosine 5'-triphosphate + 5'-deoxyadenosine + L-methionine + A + H(+). It participates in cofactor biosynthesis; molybdopterin biosynthesis. Catalyzes the cyclization of GTP to (8S)-3',8-cyclo-7,8-dihydroguanosine 5'-triphosphate. In Erythrobacter litoralis (strain HTCC2594), this protein is GTP 3',8-cyclase.